The chain runs to 118 residues: Secreted effector CSEP0064 (118 aa).

The N-terminal stretch at M1–A21 is a signal peptide. C27 and C113 are oxidised to a cystine.

In terms of assembly, interacts in planta with the pathogenesis-related protein PR10.

It localises to the secreted. The protein localises to the host cell. Its function is as follows. Secreted effector that increases susceptibility to infection in both monocotyledonous and dicotyledonous plants. Non-catalytic homolog of fungal RNases that binds host RNA and inhibits the degradation of host ribosomal RNA induced by ribosome-inactivating proteins (RIPs), preventing host cell death, an inviable interaction and demise of the fungus. The polypeptide is Secreted effector CSEP0064 (Blumeria graminis f. sp. hordei (strain DH14) (Barley powdery mildew)).